A 412-amino-acid chain; its full sequence is STAGA complex 65 subunit gamma (412 aa).

A disordered region spans residues 81 to 107; that stretch reads AQTQSQQQTEGVKAEESEPLPSCPGSP. Phosphoserine is present on Ser106. Residue Lys269 forms a Glycyl lysine isopeptide (Lys-Gly) (interchain with G-Cter in SUMO2) linkage. Phosphoserine occurs at positions 321 and 332. The disordered stretch occupies residues 364-412; sequence EEPMSGMSEAGLPQSPDDSDSSYGSHSTDSLMGSSPVFNQRCRKRMRKI. The segment covering 384–393 has biased composition (low complexity); the sequence is SSYGSHSTDS.

Component of the STAGA transcription coactivator-HAT complex, at least composed of SUPT3H, SUPT7L, GCN5L2, TAF5L, TAF6L, TADA3L, TAD1L, TAF10, TAF12 and TAF9. In terms of processing, sumoylated.

It localises to the nucleus. The sequence is that of STAGA complex 65 subunit gamma (Supt7l) from Mus musculus (Mouse).